Consider the following 210-residue polypeptide: Glutathione S-transferase-like protein FUS3 (210 aa).

Positions 1–74 constitute a GST N-terminal domain; sequence MPNARVFKIL…YVAQSGPQAS (74 aa). The region spanning 80 to 206 is the GST C-terminal domain; that stretch reads DAMSSAKIRQ…GKPNFIEKRR (127 aa).

This sequence belongs to the GST superfamily.

Glutathione S-transferase-like protein; part of the gene cluster that mediates the biosynthesis of the mycotoxin fusarin C. Within the cluster, FUS1, FUS2, FUS8 and FUS9 are sufficient for fusarin production. The other FUS cluster members are not essential for fusarin C biosynthesis. The protein is Glutathione S-transferase-like protein FUS3 of Gibberella fujikuroi (strain CBS 195.34 / IMI 58289 / NRRL A-6831) (Bakanae and foot rot disease fungus).